A 316-amino-acid polypeptide reads, in one-letter code: F-box protein At4g09920 (316 aa).

Positions 1-47 (MDRIIGLPDEVLVKILSFVPTKVAVSTSILSKRWEFLWMWLTKLKFG) constitute an F-box domain.

In Arabidopsis thaliana (Mouse-ear cress), this protein is F-box protein At4g09920.